Here is a 134-residue protein sequence, read N- to C-terminus: DNA-binding protein StpA (134 aa).

The segment at 73 to 94 is disordered; the sequence is EELLGNSSAAAPRAGKKRQPRP. A DNA-binding region spans residues 112–117; it reads QGRTPK.

This sequence belongs to the histone-like protein H-NS family. As to quaternary structure, forms homodimers, can interact with H-NS. May interact with Hha and/or Cnu.

Its subcellular location is the cytoplasm. It is found in the nucleoid. Functionally, a DNA-binding protein that acts in a fashion similar to H-NS, repressing gene transcription. A subset of H-NS/StpA-regulated genes require auxillary proteins for repression; these auxillary proteins (Hha and other similar proteins) may also modulate oligomerization of the H-NS/StpA complex. The chain is DNA-binding protein StpA (stpA) from Escherichia coli O157:H7.